Here is an 822-residue protein sequence, read N- to C-terminus: Coiled-coil domain-containing protein 175 (822 aa).

3 coiled-coil regions span residues 129 to 164, 223 to 397, and 510 to 537; these read IIEI…EVLG, IEKQ…KQMM, and HLIE…IEEL.

The chain is Coiled-coil domain-containing protein 175 (Ccdc175) from Mus musculus (Mouse).